The chain runs to 259 residues: Ribosomal RNA small subunit methyltransferase A (259 aa).

Residues asparagine 13, leucine 15, glycine 40, glutamate 61, aspartate 85, and asparagine 103 each contribute to the S-adenosyl-L-methionine site.

This sequence belongs to the class I-like SAM-binding methyltransferase superfamily. rRNA adenine N(6)-methyltransferase family. RsmA subfamily.

Its subcellular location is the cytoplasm. It catalyses the reaction adenosine(1518)/adenosine(1519) in 16S rRNA + 4 S-adenosyl-L-methionine = N(6)-dimethyladenosine(1518)/N(6)-dimethyladenosine(1519) in 16S rRNA + 4 S-adenosyl-L-homocysteine + 4 H(+). In terms of biological role, specifically dimethylates two adjacent adenosines (A1518 and A1519) in the loop of a conserved hairpin near the 3'-end of 16S rRNA in the 30S particle. May play a critical role in biogenesis of 30S subunits. The sequence is that of Ribosomal RNA small subunit methyltransferase A from Neisseria meningitidis serogroup C / serotype 2a (strain ATCC 700532 / DSM 15464 / FAM18).